Reading from the N-terminus, the 717-residue chain is Serine/threonine-protein kinase STE11 (717 aa).

One can recognise an SAM domain in the interval 20 to 84 (NDLPFVQLFL…LRKSKSFQRD (65 aa)). Position 323 is a phosphoserine (S323). Positions 415-712 (WLKGACIGSG…ALELLQHPWL (298 aa)) constitute a Protein kinase domain. Residues 421 to 429 (IGSGSFGSV) and K444 contribute to the ATP site. Over residues 452–466 (NIGVPTDNNKQANSD) the composition is skewed to polar residues. Positions 452 to 481 (NIGVPTDNNKQANSDENNEQEEQQEKIEDV) are disordered. S465 carries the phosphoserine modification. The Proton acceptor role is filled by D579.

It belongs to the protein kinase superfamily. STE Ser/Thr protein kinase family. MAP kinase kinase kinase subfamily. In terms of assembly, homodimer. Interacts (via SAM domain) with STE50 (via SAM domain). Interacts with PBS2 and SHO1.

It catalyses the reaction L-seryl-[protein] + ATP = O-phospho-L-seryl-[protein] + ADP + H(+). The enzyme catalyses L-threonyl-[protein] + ATP = O-phospho-L-threonyl-[protein] + ADP + H(+). Serine/threonine protein kinase required for cell-type-specific transcription and signal transduction in yeast. It is thought that it phosphorylates the STE7 protein kinase which itself, phosphorylates the FUS3 and or KSS1 kinases. This is Serine/threonine-protein kinase STE11 (STE11) from Saccharomyces cerevisiae (strain ATCC 204508 / S288c) (Baker's yeast).